The following is a 592-amino-acid chain: Aspartate--tRNA ligase (592 aa).

Residue glutamate 173 coordinates L-aspartate. The tract at residues 197–200 (QLFK) is aspartate. An L-aspartate-binding site is contributed by arginine 219. ATP contacts are provided by residues 219–221 (RDE) and glutamine 228. Position 448 (histidine 448) interacts with L-aspartate. Residue glutamate 482 participates in ATP binding. Arginine 489 provides a ligand contact to L-aspartate. 534 to 537 (GLDR) provides a ligand contact to ATP.

It belongs to the class-II aminoacyl-tRNA synthetase family. Type 1 subfamily. As to quaternary structure, homodimer.

Its subcellular location is the cytoplasm. The catalysed reaction is tRNA(Asp) + L-aspartate + ATP = L-aspartyl-tRNA(Asp) + AMP + diphosphate. Catalyzes the attachment of L-aspartate to tRNA(Asp) in a two-step reaction: L-aspartate is first activated by ATP to form Asp-AMP and then transferred to the acceptor end of tRNA(Asp). In Shewanella baltica (strain OS155 / ATCC BAA-1091), this protein is Aspartate--tRNA ligase.